The primary structure comprises 239 residues: Phosphoribosylaminoimidazole-succinocarboxamide synthase (239 aa).

It belongs to the SAICAR synthetase family.

The enzyme catalyses 5-amino-1-(5-phospho-D-ribosyl)imidazole-4-carboxylate + L-aspartate + ATP = (2S)-2-[5-amino-1-(5-phospho-beta-D-ribosyl)imidazole-4-carboxamido]succinate + ADP + phosphate + 2 H(+). The protein operates within purine metabolism; IMP biosynthesis via de novo pathway; 5-amino-1-(5-phospho-D-ribosyl)imidazole-4-carboxamide from 5-amino-1-(5-phospho-D-ribosyl)imidazole-4-carboxylate: step 1/2. This chain is Phosphoribosylaminoimidazole-succinocarboxamide synthase, found in Bacillus cereus (strain G9842).